The primary structure comprises 340 residues: Geranylgeranyl pyrophosphate synthase atmG (340 aa).

Polar residues predominate over residues 19 to 48 (NLDASYPTSSSLSTEPIDTRSSSPQGSAST). Positions 19 to 51 (NLDASYPTSSSLSTEPIDTRSSSPQGSASTPVD) are disordered. Lys-69, Arg-72, and His-101 together coordinate isopentenyl diphosphate. Residues Asp-108 and Asp-112 each coordinate Mg(2+). Position 117 (Arg-117) interacts with dimethylallyl diphosphate. Arg-118 lines the isopentenyl diphosphate pocket. Residues Lys-195, Thr-196, and Gln-229 each coordinate dimethylallyl diphosphate. Position 232 (Asp-232) interacts with Mg(2+). Residues Asn-236, Lys-246, and Lys-256 each contribute to the dimethylallyl diphosphate site.

It belongs to the FPP/GGPP synthase family. It depends on Mg(2+) as a cofactor.

It catalyses the reaction isopentenyl diphosphate + dimethylallyl diphosphate = (2E)-geranyl diphosphate + diphosphate. It carries out the reaction isopentenyl diphosphate + (2E)-geranyl diphosphate = (2E,6E)-farnesyl diphosphate + diphosphate. The catalysed reaction is isopentenyl diphosphate + (2E,6E)-farnesyl diphosphate = (2E,6E,10E)-geranylgeranyl diphosphate + diphosphate. Functionally, geranylgeranyl pyrophosphate synthase; part of the ATM1 gene cluster that mediates the biosynthesis of aflatrem, a tremorgenic mycotoxin with acute neurotoxic effects. Synthesis of geranylgeranyl diphosphate (GGPP) by AtmG (a GGPP synthase) precedes condensation of GGPP with indole 3-glycerol phosphate, followed by epoxidation and cyclization by AtmM (a FAD-dependent monooxygenase) and AtmC (a prenyltransferase) to produce paspaline. AtmB is also essential for paspaline production, but its exact role has not been identified yet. AtmP, a cytochrome P450 monooxygenase, subsequently converts paspaline to 13-desoxypaxilline via PC-M6 by removal of the C-30 methyl group and oxidation at C-10. AtmQ, a cytochrome P450 monooxygenase, then catalyzes the oxidation of 13-desoxypaxilline, first at C-7 to produce paspalicine and then at C-13 to form paspalinine. Finally, AtmD prenylates paspalinine to form aflatrem. In Aspergillus flavus, this protein is Geranylgeranyl pyrophosphate synthase atmG.